The sequence spans 275 residues: NH(3)-dependent NAD(+) synthetase (275 aa).

Position 46–53 (46–53 (GISGGQDS)) interacts with ATP. Mg(2+) is bound at residue Asp52. Arg141 contributes to the deamido-NAD(+) binding site. Thr161 serves as a coordination point for ATP. Glu166 is a Mg(2+) binding site. Lys174 and Asp181 together coordinate deamido-NAD(+). Positions 190 and 212 each coordinate ATP. 261-262 (HK) serves as a coordination point for deamido-NAD(+).

The protein belongs to the NAD synthetase family. As to quaternary structure, homodimer.

It catalyses the reaction deamido-NAD(+) + NH4(+) + ATP = AMP + diphosphate + NAD(+) + H(+). It functions in the pathway cofactor biosynthesis; NAD(+) biosynthesis; NAD(+) from deamido-NAD(+) (ammonia route): step 1/1. Its function is as follows. Catalyzes the ATP-dependent amidation of deamido-NAD to form NAD. Uses ammonia as a nitrogen source. This Limosilactobacillus reuteri (strain DSM 20016) (Lactobacillus reuteri) protein is NH(3)-dependent NAD(+) synthetase.